The following is a 301-amino-acid chain: Sulfate adenylyltransferase subunit 2 1 (301 aa).

The protein belongs to the PAPS reductase family. CysD subfamily. Heterodimer composed of CysD, the smaller subunit, and CysN.

It carries out the reaction sulfate + ATP + H(+) = adenosine 5'-phosphosulfate + diphosphate. It participates in sulfur metabolism; hydrogen sulfide biosynthesis; sulfite from sulfate: step 1/3. With CysN forms the ATP sulfurylase (ATPS) that catalyzes the adenylation of sulfate producing adenosine 5'-phosphosulfate (APS) and diphosphate, the first enzymatic step in sulfur assimilation pathway. APS synthesis involves the formation of a high-energy phosphoric-sulfuric acid anhydride bond driven by GTP hydrolysis by CysN coupled to ATP hydrolysis by CysD. This Shewanella sediminis (strain HAW-EB3) protein is Sulfate adenylyltransferase subunit 2 1.